The primary structure comprises 450 residues: 3-phosphoshikimate 1-carboxyvinyltransferase (450 aa).

Residues K28, S29, and R33 each coordinate 3-phosphoshikimate. K28 lines the phosphoenolpyruvate pocket. Positions 100 and 128 each coordinate phosphoenolpyruvate. Positions 173, 175, 326, and 353 each coordinate 3-phosphoshikimate. A phosphoenolpyruvate-binding site is contributed by Q175. D326 acts as the Proton acceptor in catalysis. Phosphoenolpyruvate-binding residues include R357 and R402.

It belongs to the EPSP synthase family. In terms of assembly, monomer.

The protein localises to the cytoplasm. The catalysed reaction is 3-phosphoshikimate + phosphoenolpyruvate = 5-O-(1-carboxyvinyl)-3-phosphoshikimate + phosphate. It functions in the pathway metabolic intermediate biosynthesis; chorismate biosynthesis; chorismate from D-erythrose 4-phosphate and phosphoenolpyruvate: step 6/7. In terms of biological role, catalyzes the transfer of the enolpyruvyl moiety of phosphoenolpyruvate (PEP) to the 5-hydroxyl of shikimate-3-phosphate (S3P) to produce enolpyruvyl shikimate-3-phosphate and inorganic phosphate. This chain is 3-phosphoshikimate 1-carboxyvinyltransferase, found in Brucella canis (strain ATCC 23365 / NCTC 10854 / RM-666).